We begin with the raw amino-acid sequence, 373 residues long: tRNA-specific 2-thiouridylase MnmA (373 aa).

Residues 12 to 19 (GMSGGVDS) and M38 each bind ATP. The segment at 98–100 (NPD) is interaction with target base in tRNA. The Nucleophile role is filled by C103. An intrachain disulfide couples C103 to C200. G127 is an ATP binding site. The interaction with tRNA stretch occupies residues 150–152 (KDQ). The active-site Cysteine persulfide intermediate is C200. Residues 312 to 313 (RY) are interaction with tRNA.

Belongs to the MnmA/TRMU family.

Its subcellular location is the cytoplasm. It carries out the reaction S-sulfanyl-L-cysteinyl-[protein] + uridine(34) in tRNA + AH2 + ATP = 2-thiouridine(34) in tRNA + L-cysteinyl-[protein] + A + AMP + diphosphate + H(+). Catalyzes the 2-thiolation of uridine at the wobble position (U34) of tRNA, leading to the formation of s(2)U34. The sequence is that of tRNA-specific 2-thiouridylase MnmA from Streptococcus pyogenes serotype M49 (strain NZ131).